We begin with the raw amino-acid sequence, 201 residues long: Phospholipase A2 inhibitor NAI (201 aa).

Residues 1–19 (MKSLQIICLLFVLVARGSC) form the signal peptide. 8 disulfide bridges follow: Cys22/Cys47, Cys25/Cys32, Cys40/Cys68, Cys74/Cys95, Cys96/Cys101, Cys119/Cys144, Cys137/Cys166, and Cys170/Cys191. N-linked (GlcNAc...) asparagine glycosylation occurs at Asn176.

This sequence belongs to the CNF-like-inhibitor family. Heterotrimer of 2 subunits A and 1 subunit B; non-covalently linked. N-glycosylated, probably by biantennary structure. Glycosylation does not change PLA2 inhibitory activity. Expressed by the liver.

It localises to the secreted. Its function is as follows. Inhibits the enzymatic activity of all phospholipase A2 tested, binding them with micromole to nanomole affinity. In Notechis ater (Black tiger snake), this protein is Phospholipase A2 inhibitor NAI.